A 141-amino-acid chain; its full sequence is Protein C19orf12 homolog (141 aa).

A helical membrane pass occupies residues 33 to 53 (LVAAAGAFLGGLVGGPPGIAV).

The protein belongs to the C19orf12 family.

The protein localises to the mitochondrion. The protein resides in the mitochondrion membrane. It is found in the endoplasmic reticulum. It localises to the cytoplasm. Its subcellular location is the cytosol. The chain is Protein C19orf12 homolog from Xenopus tropicalis (Western clawed frog).